The primary structure comprises 152 residues: Troponin C (152 aa).

Thr-1 carries the post-translational modification N-acetylthreonine. EF-hand domains follow at residues 9-44 (KQIL…LGLL), 45-80 (VKDD…KLKE), 82-117 (LDER…LGDE), and 118-152 (LTEE…SSDA). Ca(2+)-binding residues include Asp-131, Asp-133, Ser-135, Thr-137, and Glu-142.

Belongs to the troponin C family.

Troponin is the central regulatory protein of striated muscle contraction. Tn consists of three components: Tn-I which is the inhibitor of actomyosin ATPase, Tn-T which contains the binding site for tropomyosin and Tn-C. The binding of calcium to Tn-C abolishes the inhibitory action of Tn on actin filaments. The chain is Troponin C from Mizuhopecten yessoensis (Japanese scallop).